A 371-amino-acid polypeptide reads, in one-letter code: Peptide chain release factor 2 (371 aa).

Glutamine 251 carries the N5-methylglutamine modification.

It belongs to the prokaryotic/mitochondrial release factor family. Methylated by PrmC. Methylation increases the termination efficiency of RF2.

The protein resides in the cytoplasm. In terms of biological role, peptide chain release factor 2 directs the termination of translation in response to the peptide chain termination codons UGA and UAA. This chain is Peptide chain release factor 2, found in Pseudarthrobacter chlorophenolicus (strain ATCC 700700 / DSM 12829 / CIP 107037 / JCM 12360 / KCTC 9906 / NCIMB 13794 / A6) (Arthrobacter chlorophenolicus).